Consider the following 607-residue polypeptide: Guanine nucleotide-binding protein-like 1 (607 aa).

A compositionally biased stretch (basic residues) spans 1–14; the sequence is MPRKKPFSVKQKKK. The segment at 1-81 is disordered; that stretch reads MPRKKPFSVK…GPRGYDPNRY (81 aa). Over residues 15-26 the composition is skewed to basic and acidic residues; it reads QLQDKRERKRGL. 3 positions are modified to phosphoserine: Ser-32, Ser-33, and Ser-34. Residues Thr-48 and Thr-50 each carry the phosphothreonine modification. A phosphoserine mark is found at Ser-51 and Ser-68. Residues 178-418 form the CP-type G domain; it reads WRQLWRVLEM…LCDCPGLIFP (241 aa). Position 225-228 (225-228) interacts with GTP; sequence NKVD. Position 324 is a phosphoserine (Ser-324). Residues 367–374 and 411–415 each bind GTP; these read GFPNVGKS and DCPGL. The interval 547–607 is disordered; that stretch reads GPAGDEEEEE…PYALLGEDEC (61 aa). The segment covering 550-584 has biased composition (acidic residues); the sequence is GDEEEEEEEELSSSCEEEGEEDRDADEEGEGDEET. A phosphoserine mark is found at Ser-561, Ser-562, and Ser-563.

This sequence belongs to the TRAFAC class YlqF/YawG GTPase family.

Its function is as follows. Possible regulatory or functional link with the histocompatibility cluster. In Pan troglodytes (Chimpanzee), this protein is Guanine nucleotide-binding protein-like 1 (GNL1).